The chain runs to 107 residues: MDNCIFCKIAAKEIPAQTVYEDGEMVCFKDINPAAPLHLLLIPKVHFDSLAHAAPEHQPLLGKMMLKVPEIAKASGLTDGFKTLINTGKGGGQEVFHLHIHIMGTPV.

Residues 5–107 (IFCKIAAKEI…LHIHIMGTPV (103 aa)) enclose the HIT domain. The Histidine triad motif motif lies at 97–101 (HLHIH).

This is Protein HitA (hitA) from Neisseria gonorrhoeae.